An 85-amino-acid polypeptide reads, in one-letter code: Small ribosomal subunit protein uS17 (85 aa).

This sequence belongs to the universal ribosomal protein uS17 family. Part of the 30S ribosomal subunit.

Functionally, one of the primary rRNA binding proteins, it binds specifically to the 5'-end of 16S ribosomal RNA. The protein is Small ribosomal subunit protein uS17 of Blochmanniella floridana.